The following is a 186-amino-acid chain: Phosphoheptose isomerase 1 (186 aa).

Positions 33 to 186 (LCECLKKGGK…TLCQIIDESF (154 aa)) constitute an SIS domain. 48-50 (NGG) serves as a coordination point for substrate. The Zn(2+) site is built by H57 and E61. Substrate is bound by residues E61, 90 to 91 (ND), 116 to 118 (STS), S121, and Q168. Residues Q168 and H176 each contribute to the Zn(2+) site.

This sequence belongs to the SIS family. GmhA subfamily. In terms of assembly, homotetramer. Zn(2+) serves as cofactor.

It localises to the cytoplasm. The enzyme catalyses 2 D-sedoheptulose 7-phosphate = D-glycero-alpha-D-manno-heptose 7-phosphate + D-glycero-beta-D-manno-heptose 7-phosphate. It participates in carbohydrate biosynthesis; D-glycero-D-manno-heptose 7-phosphate biosynthesis; D-glycero-alpha-D-manno-heptose 7-phosphate and D-glycero-beta-D-manno-heptose 7-phosphate from sedoheptulose 7-phosphate: step 1/1. The protein operates within bacterial outer membrane biogenesis; LOS core biosynthesis. Functionally, catalyzes the isomerization of sedoheptulose 7-phosphate in D-glycero-D-manno-heptose 7-phosphate. The sequence is that of Phosphoheptose isomerase 1 (gmhA1) from Campylobacter jejuni subsp. jejuni serotype O:2 (strain ATCC 700819 / NCTC 11168).